Here is a 523-residue protein sequence, read N- to C-terminus: MYQNNVLNAILASEKSNFQYDSGTILRNHKRPIITFNNNIEHTVSEPNNFTGYEEKEDLDIMDICPYYPKARMLADAIQHAKTSASENKMELSMKTIPCLKKENVHVEKGHDWSQLSTSRICKILEDIADKKNKTRRQSAPLQKTKYFPTNENQNTDIENQNWSQIPNEDICALIEKIASRRNKNRKRKNLSCSKVQEIQGNIDLPKKDVQEGDISDSSLFAAVRGTKKVSGYDYNSEDKIPNAIRLPYCKQILRLFSLLQMKRNDLIVTSENCNSGVFFSNFNYQLQVKSNCIANISSTLSFLPHHEITVYTSFILYPNVVDNIWECTRYAIQLLKSEAAQFTLLRDIYSGFTIILSNHRYHPKGFSADYCYSANELTLFLFVIRTGQKKVLYRSIPHNTAAIEKDSSFDTENRKRRSEEEVVLKCRKCSNNSLALKEISTYRLDSAEGFEKSQPLKDEAKLSDMNYVQGSISYNRTILTGLWKLFHRLCCKDRYRKTNLSETLFYDDSTERWVRMGELMHY.

This is an uncharacterized protein from Saccharomyces cerevisiae (strain ATCC 204508 / S288c) (Baker's yeast).